The chain runs to 261 residues: 5'-nucleotidase SurE (261 aa).

The a divalent metal cation site is built by D18, D19, S50, and N102.

Belongs to the SurE nucleotidase family. The cofactor is a divalent metal cation.

It localises to the cytoplasm. The catalysed reaction is a ribonucleoside 5'-phosphate + H2O = a ribonucleoside + phosphate. Nucleotidase that shows phosphatase activity on nucleoside 5'-monophosphates. The sequence is that of 5'-nucleotidase SurE from Rhodospirillum rubrum (strain ATCC 11170 / ATH 1.1.1 / DSM 467 / LMG 4362 / NCIMB 8255 / S1).